The chain runs to 268 residues: Ubiquinone biosynthesis protein COQ4 homolog, mitochondrial (268 aa).

Positions 171, 172, 175, and 187 each coordinate Zn(2+).

The protein belongs to the COQ4 family. As to quaternary structure, component of a multi-subunit COQ enzyme complex. Zn(2+) serves as cofactor.

The protein localises to the mitochondrion inner membrane. It catalyses the reaction a 4-hydroxy-3-methoxy-5-(all-trans-polyprenyl)benzoate + H(+) = a 2-methoxy-6-(all-trans-polyprenyl)phenol + CO2. The protein operates within cofactor biosynthesis; ubiquinone biosynthesis. Functionally, lyase that catalyzes the C1-decarboxylation of 4-hydroxy-3-methoxy-5-(all-trans-polyprenyl)benzoic acid into 2-methoxy-6-(all-trans-polyprenyl)phenol during ubiquinone biosynthesis. The protein is Ubiquinone biosynthesis protein COQ4 homolog, mitochondrial of Drosophila melanogaster (Fruit fly).